We begin with the raw amino-acid sequence, 468 residues long: MKNFMTEDFLLTTETAKRLYHEYAADQPIYDYHCHLSPQEIAENRRFTDLGEIWLEGDHYKWRAMRTAGIEERLVTGNASFKEKYQAWAKTVPQCIGNPIYHWTHLELRRPFGITDVLFSPKTADAIWDQCNEMLQQPEFSARGIMQQMKVKMVGTTDDPADSLEHHKFIANDNSFDIAVTPSWRPDRAFKVDHVGFKDYLNKLGKAADINITRFSDLIAALAQRLEVFDAHGCRSADHGIEIMRFANEPSETDLDAILTKRINEQALTELEIAQFSSAVQAWLGKQYAKKGWVMQLHIGARRNNSSRMFKLIGGDSGFDSMDDRAFAEPLSGFLNTLDQSDELPKTILYCLNPMHNEMLATMAGNFQGGGVAGKVQFGSGWWFNDQLDGMQRQLTSVAQMGLLSQFVGMLTDSRSFLSYTRHEYFRRLLCEMIGGWVERGEAPADMALLGEMVKGICAGNAKKYFGF.

The protein belongs to the metallo-dependent hydrolases superfamily. Uronate isomerase family.

It catalyses the reaction D-glucuronate = D-fructuronate. The enzyme catalyses aldehydo-D-galacturonate = keto-D-tagaturonate. The protein operates within carbohydrate metabolism; pentose and glucuronate interconversion. In Marinomonas sp. (strain MWYL1), this protein is Uronate isomerase.